Here is a 147-residue protein sequence, read N- to C-terminus: 3-dehydroquinate dehydratase (147 aa).

Tyrosine 23 serves as the catalytic Proton acceptor. Residues asparagine 74, histidine 80, and aspartate 87 each contribute to the substrate site. Histidine 100 functions as the Proton donor in the catalytic mechanism. Substrate is bound by residues 101–102 (LS) and arginine 111.

This sequence belongs to the type-II 3-dehydroquinase family. In terms of assembly, homododecamer.

The catalysed reaction is 3-dehydroquinate = 3-dehydroshikimate + H2O. The protein operates within metabolic intermediate biosynthesis; chorismate biosynthesis; chorismate from D-erythrose 4-phosphate and phosphoenolpyruvate: step 3/7. Catalyzes a trans-dehydration via an enolate intermediate. The chain is 3-dehydroquinate dehydratase from Clostridium botulinum (strain 657 / Type Ba4).